The sequence spans 607 residues: Elongation factor 4 (607 aa).

Positions 11–193 (KNIRNFSIIA…KIVETIPAPS (183 aa)) constitute a tr-type G domain. Residues 23-28 (DHGKST) and 140-143 (NKID) contribute to the GTP site.

The protein belongs to the TRAFAC class translation factor GTPase superfamily. Classic translation factor GTPase family. LepA subfamily.

It is found in the cell membrane. The enzyme catalyses GTP + H2O = GDP + phosphate + H(+). In terms of biological role, required for accurate and efficient protein synthesis under certain stress conditions. May act as a fidelity factor of the translation reaction, by catalyzing a one-codon backward translocation of tRNAs on improperly translocated ribosomes. Back-translocation proceeds from a post-translocation (POST) complex to a pre-translocation (PRE) complex, thus giving elongation factor G a second chance to translocate the tRNAs correctly. Binds to ribosomes in a GTP-dependent manner. The sequence is that of Elongation factor 4 from Staphylococcus carnosus (strain TM300).